We begin with the raw amino-acid sequence, 136 residues long: Histone H3 (136 aa).

Residues 1–45 (MARTKQTARKSTGGKAPRKQLATKAARKSAPATGGVKKPHRYRPG) form a disordered region. The residue at position 5 (Lys-5) is an N6,N6,N6-trimethyllysine; alternate. Lys-5 is subject to N6,N6-dimethyllysine; alternate. Residues Lys-5 and Lys-10 each carry the N6-methyllysine; alternate modification. Lys-10 carries the post-translational modification N6-acetyllysine; alternate. The residue at position 11 (Ser-11) is a Phosphoserine. Lys-15 carries the post-translational modification N6,N6-dimethyllysine; alternate. N6-methyllysine; alternate occurs at positions 15, 19, 24, 28, and 37. Residues Lys-15, Lys-19, Lys-24, Lys-28, and Lys-37 each carry the N6-acetyllysine; alternate modification. Lys-28 and Lys-37 each carry N6,N6,N6-trimethyllysine; alternate. Lys-28 and Lys-37 each carry N6,N6-dimethyllysine; alternate. An N6-acetyllysine mark is found at Lys-57 and Lys-65. Lys-80 is subject to N6,N6,N6-trimethyllysine; alternate. Lys-80 carries the post-translational modification N6,N6-dimethyllysine; alternate. Position 80 is an N6-methyllysine; alternate (Lys-80).

Belongs to the histone H3 family. The nucleosome is a histone octamer containing two molecules each of H2A, H2B, H3 and H4 assembled in one H3-H4 heterotetramer and two H2A-H2B heterodimers. The octamer wraps approximately 147 bp of DNA. In terms of processing, phosphorylated to form H3S10ph. H3S10ph promotes subsequent H3K14ac formation and is required for transcriptional activation through TBP recruitment to the promoters. Post-translationally, mono-, di- and trimethylated by the COMPASS complex to form H3K4me1/2/3. H3K4me activates gene expression by regulating transcription elongation and plays a role in telomere length maintenance. H3K4me enrichment correlates with transcription levels, and occurs in a 5' to 3' gradient with H3K4me3 enrichment at the 5'-end of genes, shifting to H3K4me2 and then H3K4me1. Methylated by SET2 to form H3K36me. H3K36me represses gene expression. Methylated by DOT1 to form H3K79me. H3K79me is required for association of SIR proteins with telomeric regions and for telomeric silencing. The COMPASS-mediated formation of H3K4me2/3 and the DOT1-mediated formation of H3K79me require H2BK123ub1. Acetylation of histone H3 leads to transcriptional activation. H3K14ac formation by GCN5 is promoted by H3S10ph. H3K14ac can also be formed by ESA1. H3K56ac formation occurs predominantly in newly synthesized H3 molecules during G1, S and G2/M of the cell cycle and may be involved in DNA repair.

It is found in the nucleus. The protein localises to the chromosome. Its function is as follows. Core component of nucleosome. Nucleosomes wrap and compact DNA into chromatin, limiting DNA accessibility to the cellular machineries which require DNA as a template. Histones thereby play a central role in transcription regulation, DNA repair, DNA replication and chromosomal stability. DNA accessibility is regulated via a complex set of post-translational modifications of histones, also called histone code, and nucleosome remodeling. This chain is Histone H3 (H3.1), found in Mortierella alpina (Oleaginous fungus).